The chain runs to 265 residues: Glutamate racemase (265 aa).

Substrate contacts are provided by residues 12–13 and 44–45; these read DS and YG. The active-site Proton donor/acceptor is the Cys-75. 76–77 contributes to the substrate binding site; sequence NT. Residue Cys-186 is the Proton donor/acceptor of the active site. 187-188 is a binding site for substrate; sequence TH.

It belongs to the aspartate/glutamate racemases family.

The catalysed reaction is L-glutamate = D-glutamate. It participates in cell wall biogenesis; peptidoglycan biosynthesis. Provides the (R)-glutamate required for cell wall biosynthesis. The sequence is that of Glutamate racemase from Pseudomonas putida (strain GB-1).